A 356-amino-acid polypeptide reads, in one-letter code: Glycerol-3-phosphate dehydrogenase [NAD(P)+] (356 aa).

Residues Trp-12, Arg-32, Arg-33, and Lys-117 each coordinate NADPH. The sn-glycerol 3-phosphate site is built by Lys-117, Gly-151, and Ser-153. Position 155 (Ala-155) interacts with NADPH. Sn-glycerol 3-phosphate-binding residues include Lys-206, Asp-265, Arg-276, and Asn-277. The active-site Proton acceptor is Lys-206. NADPH is bound at residue Arg-276. NADPH contacts are provided by Leu-309 and Glu-311.

The protein belongs to the NAD-dependent glycerol-3-phosphate dehydrogenase family.

It localises to the cytoplasm. The catalysed reaction is sn-glycerol 3-phosphate + NAD(+) = dihydroxyacetone phosphate + NADH + H(+). It carries out the reaction sn-glycerol 3-phosphate + NADP(+) = dihydroxyacetone phosphate + NADPH + H(+). The protein operates within membrane lipid metabolism; glycerophospholipid metabolism. In terms of biological role, catalyzes the reduction of the glycolytic intermediate dihydroxyacetone phosphate (DHAP) to sn-glycerol 3-phosphate (G3P), the key precursor for phospholipid synthesis. The protein is Glycerol-3-phosphate dehydrogenase [NAD(P)+] of Treponema pallidum (strain Nichols).